Here is a 185-residue protein sequence, read N- to C-terminus: Protein LPA2 (185 aa).

A chloroplast-targeting transit peptide spans 1-46; sequence MALQIHSPCSFSTRPYHLFFTTRNPRFAIKCQNSQIESDTTEDPSR. The tract at residues 35-105 is disordered; the sequence is QIESDTTEDP…VFMSEEGAAK (71 aa). Residues 47–75 are compositionally biased toward low complexity; it reads SKNSSSSGVGFGSPASSSSPAKKLSAATS. Residues 83–92 show a composition bias toward basic and acidic residues; sequence KREVNRRAPV. 2 helical membrane-spanning segments follow: residues 115–135 and 152–172; these read AFLL…IILA and VYPV…AYGV.

The protein resides in the plastid. It is found in the chloroplast membrane. The polypeptide is Protein LPA2 (Arabidopsis thaliana (Mouse-ear cress)).